The following is a 151-amino-acid chain: Small ribosomal subunit protein uS15 (151 aa).

The protein belongs to the universal ribosomal protein uS15 family. Component of the small ribosomal subunit.

The protein localises to the cytoplasm. Component of the small ribosomal subunit. The ribosome is a large ribonucleoprotein complex responsible for the synthesis of proteins in the cell. The sequence is that of Small ribosomal subunit protein uS15 (rps13) from Xenopus laevis (African clawed frog).